Consider the following 151-residue polypeptide: UPF0098 protein MTH_273 (151 aa).

It belongs to the UPF0098 family.

In Methanothermobacter thermautotrophicus (strain ATCC 29096 / DSM 1053 / JCM 10044 / NBRC 100330 / Delta H) (Methanobacterium thermoautotrophicum), this protein is UPF0098 protein MTH_273.